The sequence spans 326 residues: Siroheme decarboxylase NirDL subunit (326 aa).

This sequence belongs to the Ahb/Nir family. Forms a complex composed of NirDL, NirG and NirH. All proteins are required for the total conversion of siroheme to didecarboxysiroheme.

It catalyses the reaction siroheme + 2 H(+) = 12,18-didecarboxysiroheme + 2 CO2. Its pathway is porphyrin-containing compound metabolism. In terms of biological role, involved in heme d1 biosynthesis. Catalyzes the decarboxylation of siroheme into didecarboxysiroheme. Siroheme is probably decarboxylated to monodecarboxysiroheme, which is in turn decarboxylated to didecarboxysiroheme. In Paracoccus pantotrophus (Thiosphaera pantotropha), this protein is Siroheme decarboxylase NirDL subunit.